The sequence spans 565 residues: Sulfite reductase [NADPH] hemoprotein beta-component (565 aa).

Residues Cys429, Cys435, Cys474, and Cys478 each contribute to the [4Fe-4S] cluster site. Position 478 (Cys478) interacts with siroheme.

It belongs to the nitrite and sulfite reductase 4Fe-4S domain family. In terms of assembly, alpha(8)-beta(8). The alpha component is a flavoprotein, the beta component is a hemoprotein. Siroheme is required as a cofactor. [4Fe-4S] cluster serves as cofactor.

It carries out the reaction hydrogen sulfide + 3 NADP(+) + 3 H2O = sulfite + 3 NADPH + 4 H(+). Its pathway is sulfur metabolism; hydrogen sulfide biosynthesis; hydrogen sulfide from sulfite (NADPH route): step 1/1. In terms of biological role, component of the sulfite reductase complex that catalyzes the 6-electron reduction of sulfite to sulfide. This is one of several activities required for the biosynthesis of L-cysteine from sulfate. In Shewanella baltica (strain OS185), this protein is Sulfite reductase [NADPH] hemoprotein beta-component.